Here is a 742-residue protein sequence, read N- to C-terminus: Protein-lysine N-methyltransferase SMYD4 (742 aa).

110-112 (RSA) contacts S-adenosyl-L-methionine. The 340-residue stretch at 230 to 569 (SSLSLNFSTE…SGQEIFHCYG (340 aa)) folds into the SET domain. C295, C298, C308, C311, C317, C321, H330, and C334 together coordinate Zn(2+). The MYND-type zinc-finger motif lies at 295 to 334 (CHHCLKQLLASIPCCGCSYAKYCSQNCADVAWEQYHRTEC). S-adenosyl-L-methionine contacts are provided by residues N418, 534-535 (NH), and Y568.

Belongs to the class V-like SAM-binding methyltransferase superfamily.

The protein localises to the nucleus. It is found in the cytoplasm. It carries out the reaction L-lysyl-[protein] + S-adenosyl-L-methionine = N(6)-methyl-L-lysyl-[protein] + S-adenosyl-L-homocysteine + H(+). In terms of biological role, protein-lysine N-methyltransferase. Monomethylates PRMT5, modulating its transcriptional activity. May also act as a histone methyltransferase. Plays a critical role in cardiac development. Acts as a key epigenetic regulator of gene expression during cardiac development via its dual activities as a methyltransferase and negative regulator of HDAC1. The sequence is that of Protein-lysine N-methyltransferase SMYD4 (SMYD4) from Gallus gallus (Chicken).